Consider the following 1170-residue polypeptide: Protein SCAR4 (1170 aa).

Disordered regions lie at residues 180-207, 356-376, 631-674, 701-742, 783-819, 960-980, and 1026-1046; these read KLGKDKRLRQSKKKGSHTTIKETPEDSR, NDADSPASTESEVKEAGSDDK, AAPK…PRDL, SYSG…NQTG, NQRQESPSETGSANSRTSSDESPPTQNGSVGVQSSPL, EESKATEEQSPSGVNGTSDTY, and HNNPHPAKLEEEEPQVDHPLE. Positions 183-195 are enriched in basic residues; it reads KDKRLRQSKKKGS. Residues 198 to 207 are compositionally biased toward basic and acidic residues; it reads TIKETPEDSR. Residues 356–365 show a composition bias toward polar residues; the sequence is NDADSPASTE. A compositionally biased stretch (basic and acidic residues) spans 366–376; that stretch reads SEVKEAGSDDK. Composition is skewed to polar residues over residues 640–668, 701–716, 783–818, and 967–980; these read SQDGSSMNPAQSKHISTSEISSENGTLMS, SYSGQEDPQTMSIVSD, NQRQESPSETGSANSRTSSDESPPTQNGSVGVQSSP, and EQSPSGVNGTSDTY. In terms of domain architecture, WH2 spans 1105-1123; it reads ENDSLLEIIRSKSFNLRPA.

It belongs to the SCAR/WAVE family. In terms of assembly, interacts with SPK1. As to expression, expressed in expanding cotyledons, expanding leaves and expanding siliques containing developing embryos. Detected in unopened flower buds and in the expanding tip region of roots. Reduced expression in mature leaves.

It localises to the cytoplasm. Its subcellular location is the cytoskeleton. In terms of biological role, involved in regulation of actin and microtubule organization. Part of a WAVE complex that activates the Arp2/3 complex. Regulates trichome branch positioning and expansion. This Arabidopsis thaliana (Mouse-ear cress) protein is Protein SCAR4 (SCAR4).